Here is a 123-residue protein sequence, read N- to C-terminus: MAQWKTLTKRSQGANFEQKAREFLERNGLKFIAANQQFKCGELDLIMRQGDTFVFVEVRQRKSNRFGSAVESIDYRKQQKWLDAANMWLFTRHKQSLDTANCRFDVVAFEGNDPPLWIPNFLG.

Belongs to the UPF0102 family.

The chain is UPF0102 protein APJL_1381 from Actinobacillus pleuropneumoniae serotype 3 (strain JL03).